The primary structure comprises 78 residues: Acyl carrier protein (78 aa).

One can recognise a Carrier domain in the interval 2-77 (STIEERVKKI…AAIDYIEAAN (76 aa)). S37 bears the O-(pantetheine 4'-phosphoryl)serine mark.

Belongs to the acyl carrier protein (ACP) family. Post-translationally, 4'-phosphopantetheine is transferred from CoA to a specific serine of apo-ACP by AcpS. This modification is essential for activity because fatty acids are bound in thioester linkage to the sulfhydryl of the prosthetic group.

It is found in the cytoplasm. It functions in the pathway lipid metabolism; fatty acid biosynthesis. Functionally, carrier of the growing fatty acid chain in fatty acid biosynthesis. This is Acyl carrier protein from Edwardsiella ictaluri (strain 93-146).